The sequence spans 349 residues: CCN family member 2 (349 aa).

The signal sequence occupies residues methionine 1 to glycine 26. Residues glutamine 27 to lysine 98 form the IGFBP N-terminal domain. 6 cysteine pairs are disulfide-bonded: cysteine 29-cysteine 54, cysteine 33-cysteine 56, cysteine 35-cysteine 57, cysteine 43-cysteine 60, cysteine 68-cysteine 82, and cysteine 74-cysteine 95. The region spanning alanine 101–aspartate 167 is the VWFC domain. Residues asparagine 198–glutamate 243 form the TSP type-1 domain. The tract at residues glutamate 247–alanine 349 is heparin-binding. Cystine bridges form between cysteine 256/cysteine 293, cysteine 273/cysteine 307, cysteine 284/cysteine 323, cysteine 287/cysteine 325, and cysteine 292/cysteine 329. A CTCK domain is found at cysteine 256–proline 330.

This sequence belongs to the CCN family. In terms of assembly, monomer. Interacts with TSKU.

The protein localises to the secreted. The protein resides in the extracellular space. It localises to the extracellular matrix. Functionally, major connective tissue mitoattractant secreted by vascular endothelial cells. Promotes proliferation and differentiation of chondrocytes. Is involved in the stimulation of osteoblast differentiation and has a critical role in osteogenesis. Mediates heparin- and divalent cation-dependent cell adhesion in many cell types including fibroblasts, myofibroblasts, endothelial and epithelial cells. Enhances fibroblast growth factor-induced DNA synthesis. The protein is CCN family member 2 (CCN2) of Sus scrofa (Pig).